The following is a 335-amino-acid chain: Mycobacterial beta-ketoacyl-[acyl-carrier-protein] synthase III (335 aa).

Active-site residues include C122 and H258. Residues 259–263 (QANSR) are ACP-binding. Residue N289 is part of the active site.

This sequence belongs to the thiolase-like superfamily. FabH family. As to quaternary structure, homodimer.

The protein localises to the cytoplasm. The enzyme catalyses malonyl-[ACP] + dodecanoyl-CoA + H(+) = 3-oxotetradecanoyl-[ACP] + CO2 + CoA. It participates in lipid metabolism; fatty acid biosynthesis. The protein operates within lipid metabolism; mycolic acid biosynthesis. Functionally, catalyzes the condensation reaction of fatty acid synthesis by the addition to an acyl acceptor of two carbons from malonyl-ACP. Catalyzes the first condensation reaction which initiates fatty acid synthesis and may therefore play a role in governing the total rate of fatty acid production. Possesses both acetoacetyl-ACP synthase and acetyl transacylase activities. Its substrate specificity determines the biosynthesis of branched-chain and/or straight-chain of fatty acids. The sequence is that of Mycobacterial beta-ketoacyl-[acyl-carrier-protein] synthase III from Mycobacterium marinum (strain ATCC BAA-535 / M).